A 243-amino-acid polypeptide reads, in one-letter code: L-fucose operon activator (243 aa).

The HTH deoR-type domain occupies 1 to 57 (MKAARQQAIVDLLLNHTSLTTEALSEQLKVSKETIRRDLNELQTQGKILRNHGRAKY). A DNA-binding region (H-T-H motif) is located at residues 19 to 38 (LTTEALSEQLKVSKETIRRD).

Transcriptional activator of the fuc operon. In Escherichia coli (strain K12), this protein is L-fucose operon activator (fucR).